Consider the following 185-residue polypeptide: Thymidine kinase (185 aa).

Residues 10 to 17 (GPMYSGKT) and 83 to 86 (DEVQ) each bind ATP. E84 serves as the catalytic Proton acceptor. Zn(2+)-binding residues include C140, C143, C173, and C176.

It belongs to the thymidine kinase family. Homotetramer.

Its subcellular location is the cytoplasm. The enzyme catalyses thymidine + ATP = dTMP + ADP + H(+). The sequence is that of Thymidine kinase from Pseudothermotoga lettingae (strain ATCC BAA-301 / DSM 14385 / NBRC 107922 / TMO) (Thermotoga lettingae).